A 101-amino-acid polypeptide reads, in one-letter code: Small ribosomal subunit protein uS14 (101 aa).

Belongs to the universal ribosomal protein uS14 family. In terms of assembly, part of the 30S ribosomal subunit. Contacts proteins S3 and S10.

Functionally, binds 16S rRNA, required for the assembly of 30S particles and may also be responsible for determining the conformation of the 16S rRNA at the A site. The protein is Small ribosomal subunit protein uS14 of Hyphomonas neptunium (strain ATCC 15444).